The primary structure comprises 403 residues: MAIKTVQDLINEGVQGRHVLVRADLNVPLSDGNITDPGRIDASVPTLKALLEAGARVVVSAHLGRPKGEFKEEFSLAPVAEALAERLDQWVPLATDVTGEDAHERANGLDDGDILLLENVRFDARETSKDETERTEFAAELAALTGDNGAFVSDGFGVVHRKQASVYDVAKKLPHYAGGLVEAELNVLRKVSEAPEKPYAVVLGGSKVSDKLGVIEALAPRVDNLIIGGGMCFTFLAAKGYEVGGSLLQEDMIDTCKDLLERFGDVIALPTDVVVAERFDKDADHRTVDLNSIPEGWMGLDIGPESVKAFAEVLSKSKTVFWNGPMGVFEFPAFAEGTRGVAQAIIDATAAGAFSVVGGGDSAAAVRTLGLNEEGFSHISTGGGASLEFLEGKELPGVSVLES.

Residues 24 to 26 (DLN), arginine 39, 62 to 65 (HLGR), arginine 121, and arginine 161 each bind substrate. ATP-binding positions include lysine 211, glycine 299, glutamate 330, and 359–362 (GGDS).

It belongs to the phosphoglycerate kinase family. In terms of assembly, monomer.

It localises to the cytoplasm. It catalyses the reaction (2R)-3-phosphoglycerate + ATP = (2R)-3-phospho-glyceroyl phosphate + ADP. It functions in the pathway carbohydrate degradation; glycolysis; pyruvate from D-glyceraldehyde 3-phosphate: step 2/5. The sequence is that of Phosphoglycerate kinase from Corynebacterium jeikeium (strain K411).